Here is a 56-residue protein sequence, read N- to C-terminus: Ribosome modulation factor (56 aa).

This sequence belongs to the ribosome modulation factor family.

The protein localises to the cytoplasm. Functionally, during stationary phase, converts 70S ribosomes to an inactive dimeric form (100S ribosomes). The protein is Ribosome modulation factor of Proteus mirabilis (strain HI4320).